The sequence spans 468 residues: Ribulose bisphosphate carboxylase large chain (468 aa).

An N6,N6,N6-trimethyllysine modification is found at K4. Residues N113 and T163 each coordinate substrate. K165 serves as the catalytic Proton acceptor. K167 provides a ligand contact to substrate. Mg(2+) contacts are provided by K191, D193, and E194. K191 is modified (N6-carboxylysine). Catalysis depends on H284, which acts as the Proton acceptor. Substrate-binding residues include R285, H317, and S369.

Belongs to the RuBisCO large chain family. Type I subfamily. Heterohexadecamer of 8 large chains and 8 small chains; disulfide-linked. The disulfide link is formed within the large subunit homodimers. Requires Mg(2+) as cofactor. Post-translationally, the disulfide bond which can form in the large chain dimeric partners within the hexadecamer appears to be associated with oxidative stress and protein turnover.

It is found in the plastid. Its subcellular location is the chloroplast. It carries out the reaction 2 (2R)-3-phosphoglycerate + 2 H(+) = D-ribulose 1,5-bisphosphate + CO2 + H2O. The catalysed reaction is D-ribulose 1,5-bisphosphate + O2 = 2-phosphoglycolate + (2R)-3-phosphoglycerate + 2 H(+). RuBisCO catalyzes two reactions: the carboxylation of D-ribulose 1,5-bisphosphate, the primary event in carbon dioxide fixation, as well as the oxidative fragmentation of the pentose substrate in the photorespiration process. Both reactions occur simultaneously and in competition at the same active site. The sequence is that of Ribulose bisphosphate carboxylase large chain from Pandorea jasminoides (Bower vine).